The primary structure comprises 270 residues: Phosphoribosylformylglycinamidine synthase subunit PurQ (270 aa).

A Glutamine amidotransferase type-1 domain is found at 5-251 (ALVLHATGTN…VIRERDSEEE (247 aa)). Cys95 serves as the catalytic Nucleophile. Residues His236 and Glu238 contribute to the active site.

As to quaternary structure, part of the FGAM synthase complex composed of 1 PurL, 1 PurQ and 2 PurS subunits.

The protein resides in the cytoplasm. It carries out the reaction N(2)-formyl-N(1)-(5-phospho-beta-D-ribosyl)glycinamide + L-glutamine + ATP + H2O = 2-formamido-N(1)-(5-O-phospho-beta-D-ribosyl)acetamidine + L-glutamate + ADP + phosphate + H(+). The catalysed reaction is L-glutamine + H2O = L-glutamate + NH4(+). The protein operates within purine metabolism; IMP biosynthesis via de novo pathway; 5-amino-1-(5-phospho-D-ribosyl)imidazole from N(2)-formyl-N(1)-(5-phospho-D-ribosyl)glycinamide: step 1/2. Its function is as follows. Part of the phosphoribosylformylglycinamidine synthase complex involved in the purines biosynthetic pathway. Catalyzes the ATP-dependent conversion of formylglycinamide ribonucleotide (FGAR) and glutamine to yield formylglycinamidine ribonucleotide (FGAM) and glutamate. The FGAM synthase complex is composed of three subunits. PurQ produces an ammonia molecule by converting glutamine to glutamate. PurL transfers the ammonia molecule to FGAR to form FGAM in an ATP-dependent manner. PurS interacts with PurQ and PurL and is thought to assist in the transfer of the ammonia molecule from PurQ to PurL. This Treponema denticola (strain ATCC 35405 / DSM 14222 / CIP 103919 / JCM 8153 / KCTC 15104) protein is Phosphoribosylformylglycinamidine synthase subunit PurQ.